Reading from the N-terminus, the 207-residue chain is Transcriptional regulator YqjI (207 aa).

Positions 1–40 (MSHHHEGCCKHEGQPRHEGCCKGEKSEHEHCGHGHQHEHG) are enriched in basic and acidic residues. Residues 1 to 46 (MSHHHEGCCKHEGQPRHEGCCKGEKSEHEHCGHGHQHEHGQCCGGR) are disordered.

Oligomer (probable predominant form) and monomer.

Its activity is regulated as follows. Divalent metals such as nickel and iron have a similar negative effect on YqjI DNA-binding activity. Its function is as follows. Represses the expression of YqjH which is involved in iron homeostasis under excess nickel conditions. Also represses its own expression. In Escherichia coli (strain K12), this protein is Transcriptional regulator YqjI (yqjI).